We begin with the raw amino-acid sequence, 121 residues long: uncharacterized protein (121 aa).

This is an uncharacterized protein from Aquifex aeolicus (strain VF5).